Consider the following 189-residue polypeptide: Thermostable direct hemolysin 2 (189 aa).

An N-terminal signal peptide occupies residues 1–24 (MKYRYFAKKSFLFISMLAAFKTFA). Cys175 and Cys185 are oxidised to a cystine.

This sequence belongs to the TDH hemolysin family. As to quaternary structure, homodimer.

Bacterial hemolysins are exotoxins that attack blood cell membranes and cause cell rupture by mechanisms not clearly defined. The sequence is that of Thermostable direct hemolysin 2 (tdh2) from Vibrio parahaemolyticus serotype O3:K6 (strain RIMD 2210633).